The chain runs to 608 residues: Leucine aminopeptidase 2 (608 aa).

Residues Q134–Q136 and P269–E274 contribute to the substrate site. H298 provides a ligand contact to Zn(2+). E299 acts as the Proton acceptor in catalysis. The Zn(2+) site is built by H302 and E321. Y386 functions as the Proton donor in the catalytic mechanism.

Belongs to the peptidase M1 family. It depends on Zn(2+) as a cofactor.

It is found in the cytoplasm. It localises to the nucleus. It catalyses the reaction an epoxide + H2O = an ethanediol. Its function is as follows. Aminopeptidase that preferentially cleaves di- and tripeptides. Also has low epoxide hydrolase activity (in vitro). Can hydrolyze the epoxide leukotriene LTA(4) but it forms preferentially 5,6-dihydroxy-7,9,11,14-eicosatetraenoic acid rather than the cytokine leukotriene B(4) as the product compared to the homologous mammalian enzyme (in vitro). This is Leucine aminopeptidase 2 from Sclerotinia sclerotiorum (strain ATCC 18683 / 1980 / Ss-1) (White mold).